A 1042-amino-acid chain; its full sequence is Isoleucine--tRNA ligase (1042 aa).

Positions P48–H58 match the 'HIGH' region motif. Positions K594–S598 match the 'KMSKS' region motif. K597 serves as a coordination point for ATP.

It belongs to the class-I aminoacyl-tRNA synthetase family. IleS type 2 subfamily. As to quaternary structure, monomer. Requires Zn(2+) as cofactor.

It localises to the cytoplasm. The enzyme catalyses tRNA(Ile) + L-isoleucine + ATP = L-isoleucyl-tRNA(Ile) + AMP + diphosphate. Functionally, catalyzes the attachment of isoleucine to tRNA(Ile). As IleRS can inadvertently accommodate and process structurally similar amino acids such as valine, to avoid such errors it has two additional distinct tRNA(Ile)-dependent editing activities. One activity is designated as 'pretransfer' editing and involves the hydrolysis of activated Val-AMP. The other activity is designated 'posttransfer' editing and involves deacylation of mischarged Val-tRNA(Ile). In Borreliella burgdorferi (strain ZS7) (Borrelia burgdorferi), this protein is Isoleucine--tRNA ligase.